Consider the following 487-residue polypeptide: Betaine aldehyde dehydrogenase (487 aa).

Serine 26 and aspartate 93 together coordinate K(+). 150–152 (GAW) is an NAD(+) binding site. Lysine 162 (charge relay system) is an active-site residue. Residues 176-179 (KPSE) and 229-232 (SVPT) contribute to the NAD(+) site. K(+) is bound at residue leucine 244. The active-site Proton acceptor is glutamate 250. Positions 252, 284, and 384 each coordinate NAD(+). The active-site Nucleophile is the cysteine 284. Position 284 is a cysteine sulfenic acid (-SOH) (cysteine 284). Residues lysine 454 and glycine 457 each coordinate K(+). Catalysis depends on glutamate 461, which acts as the Charge relay system.

Belongs to the aldehyde dehydrogenase family. As to quaternary structure, dimer of dimers. K(+) serves as cofactor.

It catalyses the reaction betaine aldehyde + NAD(+) + H2O = glycine betaine + NADH + 2 H(+). The protein operates within amine and polyamine biosynthesis; betaine biosynthesis via choline pathway; betaine from betaine aldehyde: step 1/1. Functionally, involved in the biosynthesis of the osmoprotectant glycine betaine. Catalyzes the irreversible oxidation of betaine aldehyde to the corresponding acid. The sequence is that of Betaine aldehyde dehydrogenase from Rhizobium leguminosarum bv. trifolii (strain WSM2304).